We begin with the raw amino-acid sequence, 455 residues long: Probable xyloglucan galactosyltransferase GT17 (455 aa).

Residues 1–34 lie on the Cytoplasmic side of the membrane; it reads MTFNKRQVKINHWPEKNDKEKQKYSKNRETVKLT. The helical; Signal-anchor for type II membrane protein transmembrane segment at 35–55 threads the bilayer; it reads LLTLLLLCSICFLFLTLNFPF. Topologically, residues 56-455 are lumenal; sequence TIEFTASIPR…QARDNVVVSL (400 aa). N70, N169, N230, N390, and N426 each carry an N-linked (GlcNAc...) asparagine glycan.

Belongs to the glycosyltransferase 47 family. Expressed in roots and hypocotyls.

The protein localises to the golgi apparatus membrane. Functionally, functions in xyloglucan synthesis by adding side chains to the xylosylated glucan backbone. Involved in the galactosylation of hemicellulose xyloglucan. This is Probable xyloglucan galactosyltransferase GT17 from Arabidopsis thaliana (Mouse-ear cress).